The following is a 297-amino-acid chain: ClpXP adapter protein SpxH (297 aa).

It belongs to the SpxH family. As to quaternary structure, interacts with Spx.

It is found in the cytoplasm. Its function is as follows. Adapter protein required for efficient degradation of Spx by ClpXP under non-stress conditions. Interaction with Spx stabilizes Spx and exposes the C-terminus of Spx for recognition and proteolysis by ClpXP. The protein is ClpXP adapter protein SpxH of Bacillus cereus (strain ZK / E33L).